We begin with the raw amino-acid sequence, 799 residues long: DISARM protein DrmE (799 aa).

It localises to the cytoplasm. In terms of biological role, component of antiviral defense system DISARM (defense island system associated with restriction-modification), composed of DrmE, DrmA, DrmB, DrmC and DrmMII. DISARM is probably a multi-gene restriction module, this subunit has an unknown function. Expression of DISARM in B.subtilis (strain BEST7003) confers resistance to phages Nf, phi29, phi105, phi3T, SPO1, SPR and SPP1. Protection is over 10(7)-fold against phi3T, 10(4)-10(5)-fold against Nf, phi29, phi105 and SPR, 100-fold against SPO1 and 10-fold against SPP1. DISARM does not interfere with phage adsorption, but instead interferes with (phi3T) DNA replication early in its cycle, preventing replication, circularization and lysogeny and probably causes phage DNA degradation (DNA is degraded in SPP1-infected cells). The sequence is that of DISARM protein DrmE from Bacillus paralicheniformis (strain ATCC 9945a / NCIMB 11709 / CD-2).